Here is a 326-residue protein sequence, read N- to C-terminus: Chitinase 12 (326 aa).

The N-terminal stretch at 1 to 21 (MRALAVVAMVATAFLAAAVHA) is a signal peptide. The region spanning 22 to 62 (EQCGSQAGGAVCPNCLCCSQFGWCGSTSDYCGAGCQSQCSA) is the Chitin-binding type-1 domain. 8 disulfides stabilise this stretch: C24–C39, C33–C45, C36–C65, C38–C52, C56–C60, C102–C165, C179–C187, and C286–C318. E147 functions as the Proton donor in the catalytic mechanism.

It belongs to the glycosyl hydrolase 19 family. Chitinase class I subfamily. As to expression, expressed in meristems and at lower levels in roots and sheaths.

The catalysed reaction is Random endo-hydrolysis of N-acetyl-beta-D-glucosaminide (1-&gt;4)-beta-linkages in chitin and chitodextrins.. Its function is as follows. Hydrolyzes chitin and plays a role in defense against fungal pathogens containing chitin. Its overexpression confers enhanced resistance to sheath blight pathogen (R.solani). The chain is Chitinase 12 (Cht12) from Oryza sativa subsp. japonica (Rice).